The following is a 1581-amino-acid chain: Mediator of RNA polymerase II transcription subunit 1 (1581 aa).

Residues 1–670 are interaction with the Mediator complex and THRA; sequence MKAQGETEES…YGSSPLERQN (670 aa). Residues 16-590 are interaction with ESR1; that stretch reads MSSLLERLHA…SIKDRHESVG (575 aa). 2 interaction with the Mediator complex regions span residues 108 to 212 and 215 to 390; these read FYVE…GYLT and SGGH…SLQG. The interaction with THRA stretch occupies residues 405–644; the sequence is PLILNLIRHQ…MAGNTKNHPM (240 aa). The interaction with VDR stretch occupies residues 542 to 789; that stretch reads PASSPGYGMT…TDILSDIAEE (248 aa). Ser588 bears the Phosphoserine mark. Residues 604 to 608 carry the LXXLL motif 1 motif; sequence LTSLL. 4 disordered regions span residues 609-705, 792-820, 874-893, and 948-1566; these read QITG…HQTE, KLPS…QSTL, SQSG…GDND, and EHHS…DFMI. Residues 622–632 show a composition bias toward pro residues; it reads PTPPHHTPPPV. The tract at residues 622–701 is interaction with PPARGC1A and THRA; sequence PTPPHHTPPP…SSRLPPEKPK (80 aa). Residues 645 to 649 carry the LXXLL motif 2 motif; it reads LMNLL. Residues 655 to 675 are compositionally biased toward polar residues; sequence QDFSTLYGSSPLERQNSSSGS. The tract at residues 656–1066 is interaction with ESR1; the sequence is DFSTLYGSSP…TPPIPKITIQ (411 aa). At Ser664 the chain carries Phosphoserine. Positions 681-715 are interaction with GATA1; that stretch reads CSGSNKTKKKKSSRLPPEKPKHQTEDDFQRELFSM. Basic and acidic residues predominate over residues 696-705; that stretch reads PPEKPKHQTE. Ser795 is subject to Phosphoserine. Thr805 carries the phosphothreonine modification. Positions 808–820 are enriched in polar residues; the sequence is RDSSSSGHSQSTL. The short motif at 875 to 902 is the Integrase domain-binding motif (IBM) element; sequence QSGFGEEYFDESSQSGDNDDFKGFASQA. Residues Ser887 and Ser953 each carry the phosphoserine modification. The span at 963-974 shows a compositional bias: basic and acidic residues; that stretch reads LGKEKTQKRVKE. Phosphothreonine; by MAPK1 or MAPK3 is present on Thr1032. Over residues 1034–1045 the composition is skewed to low complexity; sequence PTSTGGSKSPGS. Phosphothreonine occurs at positions 1051 and 1057. Composition is skewed to low complexity over residues 1078–1094 and 1101–1156; these read SSHS…SSGS and SSSS…PGSS. Ser1156 carries the post-translational modification Phosphoserine. The segment covering 1162–1195 has biased composition (polar residues); the sequence is GLSSGSSSTKMKPQGKPSSLMNPSLSKPNISPSH. Lys1177 bears the N6-acetyllysine mark. At Ser1207 the chain carries Phosphoserine. At Thr1215 the chain carries Phosphothreonine. 2 stretches are compositionally biased toward low complexity: residues 1218-1227 and 1234-1293; these read SSKAKSPISS and MSGT…SKGK. Ser1223 carries the post-translational modification Phosphoserine. Positions 1249–1421 are interaction with TP53; sequence LGSSGSLSQK…KPGESSGEGL (173 aa). Ser1302 bears the Phosphoserine mark. Polar residues predominate over residues 1330–1345; sequence GVSTNSSSHPMSSKHN. The residue at position 1347 (Ser1347) is a Phosphoserine. The span at 1352–1364 shows a compositional bias: basic and acidic residues; that stretch reads QGKREKSDKDKSK. Phosphoserine occurs at positions 1403 and 1433. 2 stretches are compositionally biased toward polar residues: residues 1425–1440 and 1448–1482; these read MASS…SGST and PSHS…SPSS. Residue Thr1440 is modified to Phosphothreonine. The residue at position 1457 (Thr1457) is a Phosphothreonine; by MAPK1 or MAPK3. Phosphoserine is present on residues Ser1463, Ser1465, Ser1479, Ser1481, and Ser1482. Basic residues predominate over residues 1496 to 1505; the sequence is KHKKHKKEKK. Residues 1506–1522 are compositionally biased toward basic and acidic residues; it reads KVKDKDRDRDRDKDRDK. Lys1529 carries the N6-acetyllysine modification. A compositionally biased stretch (polar residues) spans 1533-1552; the sequence is WSKSPISSDQSLSMTSNTIL.

The protein belongs to the Mediator complex subunit 1 family. Component of the Mediator complex, which is composed of MED1, MED4, MED6, MED7, MED8, MED9, MED10, MED11, MED12, MED13, MED13L, MED14, MED15, MED16, MED17, MED18, MED19, MED20, MED21, MED22, MED23, MED24, MED25, MED26, MED27, MED29, MED30, MED31, CCNC, CDK8 and CDC2L6/CDK11. The MED12, MED13, CCNC and CDK8 subunits form a distinct module termed the CDK8 module. Mediator containing the CDK8 module is less active than Mediator lacking this module in supporting transcriptional activation. Individual preparations of the Mediator complex lacking one or more distinct subunits have been variously termed ARC, CRSP, DRIP, PC2, SMCC and TRAP. This subunit specifically interacts with a number of nuclear receptors in a ligand-dependent fashion including AR, ESR1, ESR2, PPARA, PPARG, RORA, RXRA, RXRG, THRA, THRB and VDR. Interacts with CTNNB1, GABPA, GLI3, PPARGC1A and TP53. Interacts with YWHAH. Interacts with CLOCK; this interaction requires the presence of THRAP3. Interacts with GATA1 and CCAR1. Interacts with NR4A3. Interacts (via IBM motif) with PSIP1 (via IBD domain); phosphorylation increases its affinity for PSIP1. Interacts with USP22. In terms of processing, phosphorylated by MAPK1 or MAPK3 during G2/M phase which may enhance protein stability and promote entry into the nucleolus. Phosphorylation increases its interaction with PSIP1. Ubiquitously expressed.

Its subcellular location is the nucleus. Its function is as follows. Component of the Mediator complex, a coactivator involved in the regulated transcription of nearly all RNA polymerase II-dependent genes. Mediator functions as a bridge to convey information from gene-specific regulatory proteins to the basal RNA polymerase II transcription machinery. Mediator is recruited to promoters by direct interactions with regulatory proteins and serves as a scaffold for the assembly of a functional preinitiation complex with RNA polymerase II and the general transcription factors. Acts as a coactivator for GATA1-mediated transcriptional activation during erythroid differentiation of K562 erythroleukemia cells. This is Mediator of RNA polymerase II transcription subunit 1 (MED1) from Homo sapiens (Human).